Here is a 616-residue protein sequence, read N- to C-terminus: Dihydroxy-acid dehydratase (616 aa).

A Mg(2+)-binding site is contributed by Asp81. Cys122 provides a ligand contact to [2Fe-2S] cluster. Mg(2+)-binding residues include Asp123 and Lys124. Lys124 is subject to N6-carboxylysine. Position 195 (Cys195) interacts with [2Fe-2S] cluster. Glu491 contacts Mg(2+). The Proton acceptor role is filled by Ser517.

The protein belongs to the IlvD/Edd family. As to quaternary structure, homodimer. [2Fe-2S] cluster is required as a cofactor. Mg(2+) serves as cofactor.

It catalyses the reaction (2R)-2,3-dihydroxy-3-methylbutanoate = 3-methyl-2-oxobutanoate + H2O. The enzyme catalyses (2R,3R)-2,3-dihydroxy-3-methylpentanoate = (S)-3-methyl-2-oxopentanoate + H2O. Its pathway is amino-acid biosynthesis; L-isoleucine biosynthesis; L-isoleucine from 2-oxobutanoate: step 3/4. It participates in amino-acid biosynthesis; L-valine biosynthesis; L-valine from pyruvate: step 3/4. Functionally, functions in the biosynthesis of branched-chain amino acids. Catalyzes the dehydration of (2R,3R)-2,3-dihydroxy-3-methylpentanoate (2,3-dihydroxy-3-methylvalerate) into 2-oxo-3-methylpentanoate (2-oxo-3-methylvalerate) and of (2R)-2,3-dihydroxy-3-methylbutanoate (2,3-dihydroxyisovalerate) into 2-oxo-3-methylbutanoate (2-oxoisovalerate), the penultimate precursor to L-isoleucine and L-valine, respectively. The polypeptide is Dihydroxy-acid dehydratase (Shewanella loihica (strain ATCC BAA-1088 / PV-4)).